Consider the following 276-residue polypeptide: Ribosomal RNA small subunit methyltransferase A (276 aa).

Residues N27, L29, G54, E75, D101, and N123 each coordinate S-adenosyl-L-methionine.

The protein belongs to the class I-like SAM-binding methyltransferase superfamily. rRNA adenine N(6)-methyltransferase family. RsmA subfamily.

It is found in the cytoplasm. It catalyses the reaction adenosine(1518)/adenosine(1519) in 16S rRNA + 4 S-adenosyl-L-methionine = N(6)-dimethyladenosine(1518)/N(6)-dimethyladenosine(1519) in 16S rRNA + 4 S-adenosyl-L-homocysteine + 4 H(+). Its function is as follows. Specifically dimethylates two adjacent adenosines (A1518 and A1519) in the loop of a conserved hairpin near the 3'-end of 16S rRNA in the 30S particle. May play a critical role in biogenesis of 30S subunits. In Bartonella henselae (strain ATCC 49882 / DSM 28221 / CCUG 30454 / Houston 1) (Rochalimaea henselae), this protein is Ribosomal RNA small subunit methyltransferase A.